The primary structure comprises 315 residues: Isoaspartyl peptidase/L-asparaginase 1 (315 aa).

Ser169 is subject to Phosphoserine. Thr183 functions as the Nucleophile in the catalytic mechanism. Residues 211 to 214 (RIGD) and 233 to 236 (TGKG) each bind substrate.

It belongs to the Ntn-hydrolase family. As to quaternary structure, heterotetramer of two alpha and two beta chains arranged as a dimer of alpha/beta heterodimers. Cleaved into an alpha and beta chain by autocatalysis; this activates the enzyme. The N-terminal residue of the beta subunit is responsible for the nucleophile hydrolase activity.

The enzyme catalyses Cleavage of a beta-linked Asp residue from the N-terminus of a polypeptide.. Its function is as follows. Acts in asparagine catabolism but also in the final steps of protein and degradation via hydrolysis of a range of isoaspartyl dipeptides. The affinity for Asn and at least 4 isoaspartyl dipeptides (L-beta-Asp-Ala, L-beta-Asp-Gly, L-beta-Asp-Leu, L-beta-Asp-Phe) is quite low, KM being greater than 4.0 mM. The enzyme is inactive on alpha-aspartyl dipeptides. This Arabidopsis thaliana (Mouse-ear cress) protein is Isoaspartyl peptidase/L-asparaginase 1.